The sequence spans 876 residues: Valine--tRNA ligase (876 aa).

The 'HIGH' region signature appears at 43–53 (PNVTGVLHMGH). The 'KMSKS' region motif lies at 532–536 (KMSKS). Lys535 is an ATP binding site. Coiled-coil stretches lie at residues 805-826 (GNMI…HKEG) and 853-875 (RKKQ…SLKN).

The protein belongs to the class-I aminoacyl-tRNA synthetase family. ValS type 1 subfamily. In terms of assembly, monomer.

The protein resides in the cytoplasm. It catalyses the reaction tRNA(Val) + L-valine + ATP = L-valyl-tRNA(Val) + AMP + diphosphate. In terms of biological role, catalyzes the attachment of valine to tRNA(Val). As ValRS can inadvertently accommodate and process structurally similar amino acids such as threonine, to avoid such errors, it has a 'posttransfer' editing activity that hydrolyzes mischarged Thr-tRNA(Val) in a tRNA-dependent manner. The sequence is that of Valine--tRNA ligase from Bacteroides fragilis (strain ATCC 25285 / DSM 2151 / CCUG 4856 / JCM 11019 / LMG 10263 / NCTC 9343 / Onslow / VPI 2553 / EN-2).